We begin with the raw amino-acid sequence, 187 residues long: Ribose 1,5-bisphosphate phosphokinase PhnN (187 aa).

9–16 (GPSGSGKD) contacts ATP.

This sequence belongs to the ribose 1,5-bisphosphokinase family.

It carries out the reaction alpha-D-ribose 1,5-bisphosphate + ATP = 5-phospho-alpha-D-ribose 1-diphosphate + ADP. It functions in the pathway metabolic intermediate biosynthesis; 5-phospho-alpha-D-ribose 1-diphosphate biosynthesis; 5-phospho-alpha-D-ribose 1-diphosphate from D-ribose 5-phosphate (route II): step 3/3. In terms of biological role, catalyzes the phosphorylation of ribose 1,5-bisphosphate to 5-phospho-D-ribosyl alpha-1-diphosphate (PRPP). The chain is Ribose 1,5-bisphosphate phosphokinase PhnN from Desulfomicrobium baculatum (strain DSM 4028 / VKM B-1378 / X) (Desulfovibrio baculatus).